The chain runs to 227 residues: Phosphoglycolate phosphatase (227 aa).

The active-site Nucleophile is the D11. D11, D13, and D176 together coordinate Mg(2+).

This sequence belongs to the HAD-like hydrolase superfamily. CbbY/CbbZ/Gph/YieH family. The cofactor is Mg(2+).

The enzyme catalyses 2-phosphoglycolate + H2O = glycolate + phosphate. It functions in the pathway organic acid metabolism; glycolate biosynthesis; glycolate from 2-phosphoglycolate: step 1/1. Specifically catalyzes the dephosphorylation of 2-phosphoglycolate. Is involved in the dissimilation of the intracellular 2-phosphoglycolate formed during the DNA repair of 3'-phosphoglycolate ends, a major class of DNA lesions induced by oxidative stress. The sequence is that of Phosphoglycolate phosphatase from Aliivibrio fischeri (strain ATCC 700601 / ES114) (Vibrio fischeri).